The sequence spans 358 residues: Methylthioribose-1-phosphate isomerase (358 aa).

Residues 54 to 56 (RGA), R96, and Q205 each bind substrate. The active-site Proton donor is D246. A substrate-binding site is contributed by 256 to 257 (AK).

The protein belongs to the eIF-2B alpha/beta/delta subunits family. MtnA subfamily.

The catalysed reaction is 5-(methylsulfanyl)-alpha-D-ribose 1-phosphate = 5-(methylsulfanyl)-D-ribulose 1-phosphate. Its pathway is amino-acid biosynthesis; L-methionine biosynthesis via salvage pathway; L-methionine from S-methyl-5-thio-alpha-D-ribose 1-phosphate: step 1/6. In terms of biological role, catalyzes the interconversion of methylthioribose-1-phosphate (MTR-1-P) into methylthioribulose-1-phosphate (MTRu-1-P). This is Methylthioribose-1-phosphate isomerase from Pseudomonas entomophila (strain L48).